A 169-amino-acid chain; its full sequence is Ubiquitin-fold modifier-conjugating enzyme 1 (169 aa).

Cys-116 acts as the Glycyl thioester intermediate in catalysis.

The protein belongs to the ubiquitin-conjugating enzyme family. UFC1 subfamily.

In terms of biological role, E2-like enzyme which forms an intermediate with UFM1 via a thioester linkage. This Nematostella vectensis (Starlet sea anemone) protein is Ubiquitin-fold modifier-conjugating enzyme 1.